We begin with the raw amino-acid sequence, 580 residues long: Trafficking protein particle complex subunit 14 (580 aa).

Disordered stretches follow at residues 95-134 (GSAG…TSGG) and 480-533 (VSHP…RSGS). The segment covering 105–116 (PGGGDPGGGGLF) has biased composition (gly residues). S491 carries the post-translational modification Phosphoserine. The span at 492-502 (RKSSPSSPAVR) shows a compositional bias: low complexity. The span at 512–525 (LGRSQSFSHQQPSR) shows a compositional bias: polar residues. A Phosphoserine modification is found at S517. At T541 the chain carries Phosphothreonine. The residue at position 546 (S546) is a Phosphoserine.

Component of the multisubunit TRAPP II complex, which includes at least TRAPPC1, TRAPPC2, TRAPPC2L, TRAPPC3, TRAPPC4, TRAPPC5, TRAPPC6A/B, TRAPPC9, TRAPPC10 and TRAPPC14. TRAPPC9, TRAPPC10 and TRAPPC14 are specific subunits of the TRAPP II complex. Interacts with alpha-tubulin during mitosis. Interacts with RAB3IP (via the N-terminal region); this interaction mediates RAB3IP association with the TRAPP II complex. Interacts with TRAPPC10. Interacts with FBF1.

It is found in the cytoplasm. It localises to the cytoskeleton. The protein localises to the spindle. Its subcellular location is the vesicle. The protein resides in the midbody. In terms of biological role, specific subunit of the TRAPP (transport protein particle) II complex, a highly conserved vesicle tethering complex that functions in late Golgi trafficking as a membrane tether. TRAPPC14 is dispensable for TRAPPII complex integrity but mediates RAB3IP preciliary vesicle trafficking to the mother centriole during ciliogenesis. Modulates YAP1 activity as transcriptional regulator. The chain is Trafficking protein particle complex subunit 14 from Mus musculus (Mouse).